The primary structure comprises 151 residues: Small ribosomal subunit protein uS11 (151 aa).

At serine 16 the chain carries Phosphoserine. Residues lysine 61, lysine 63, and lysine 106 each participate in a glycyl lysine isopeptide (Lys-Gly) (interchain with G-Cter in SUMO2) cross-link. The segment at aspartate 131–leucine 151 is disordered. Threonine 133 bears the Phosphothreonine mark. Serine 139 is subject to Phosphoserine. Positions arginine 142–leucine 151 are enriched in basic residues.

This sequence belongs to the universal ribosomal protein uS11 family. As to quaternary structure, component of the small ribosomal subunit. Part of the small subunit (SSU) processome, composed of more than 70 proteins and the RNA chaperone small nucleolar RNA (snoRNA) U3.

The protein resides in the cytoplasm. The protein localises to the nucleus. Its subcellular location is the nucleolus. Its function is as follows. Component of the small ribosomal subunit. The ribosome is a large ribonucleoprotein complex responsible for the synthesis of proteins in the cell. Part of the small subunit (SSU) processome, first precursor of the small eukaryotic ribosomal subunit. During the assembly of the SSU processome in the nucleolus, many ribosome biogenesis factors, an RNA chaperone and ribosomal proteins associate with the nascent pre-rRNA and work in concert to generate RNA folding, modifications, rearrangements and cleavage as well as targeted degradation of pre-ribosomal RNA by the RNA exosome. This chain is Small ribosomal subunit protein uS11 (Rps14), found in Mus musculus (Mouse).